We begin with the raw amino-acid sequence, 176 residues long: Ribosome maturation factor RimM (176 aa).

One can recognise a PRC barrel domain in the interval 93 to 172 (KDEFFYFDII…KIQVKNSLDI (80 aa)).

Belongs to the RimM family. As to quaternary structure, binds ribosomal protein uS19.

It localises to the cytoplasm. Its function is as follows. An accessory protein needed during the final step in the assembly of 30S ribosomal subunit, possibly for assembly of the head region. Essential for efficient processing of 16S rRNA. May be needed both before and after RbfA during the maturation of 16S rRNA. It has affinity for free ribosomal 30S subunits but not for 70S ribosomes. The polypeptide is Ribosome maturation factor RimM (Campylobacter fetus subsp. fetus (strain 82-40)).